The sequence spans 418 residues: MTGHPRPPADGAHTDVCVVGGGPAGLTLALLMLRSGARVTLVERSRSLDRAYRGEILQPGGQALLDALGVLEGARRRGCHEHDGFRLEERGRTLINGDYRRLPGPYNCLLSLPQQHLLTDLLERCRAHPRFTCLTGTKVNGLVEEGGVVRGVVCGGGADGLVVRADCVVGADGRYSTVRKLAGIPYDRIELFDQDVLWCKLTAPATRTVRIFRAGGNPVLAYTSFPDCVQLGWTLPHKGYQALAERGFAHVKERIRAAVPEYADTVDQQLNSFKDVSLLDVFAGSARRWARDGLLLIGDSAHTHSPIGAQGINLAIQDAVAAHPVLCEGLRRRDLSERFLDAVAARRRPETERATRVQVMQSRMMLSTGRVSAAVRPKAAMLVSRTPAYRSVLRRIAYGDQTLRVRSDLFEEGEPATV.

FAD is bound by residues 15–44 (DVCVVGGGPAGLTLALLMLRSGARVTLVER) and 289–299 (WARDGLLLIGD).

It belongs to the PheA/TfdB FAD monooxygenase family. The cofactor is FAD.

It catalyses the reaction 6-methylpretetramide + NADPH + O2 + 2 H(+) = 4-hydroxy-6-methylpretetramide + NADP(+) + H2O. It functions in the pathway antibiotic biosynthesis; oxytetracycline biosynthesis. Functionally, involved in the biosynthesis of the tetracycline antibiotic, oxytetracycline. Catalyzes the C-4 hydroxylation of 6-methylpretetramide to yield the intermediate 4-hydroxyl-6-methylpretetramid, which is subsequently hydroxylated by OxyL to yield 4-keto-anhydrotetracycline. OxyE serves as the ancillary enzyme to assist OxyL in the hydroxylation of C-4. This is 6-methylpretetramide 4-monooxygenase from Streptomyces rimosus.